A 407-amino-acid chain; its full sequence is MKYDNLLDRFIKYVKVNTRSDPDSETTPSTESQEAFALTILKPEMEAIGLQDVHYNPVNGYLIGTLPANNPTLTRKIGFIAHMDTADFNAENVNPQIIDNYQGGDITLGSSNYKLDPKAFPNLNNYIGQTLITTDGTTLLGADDKSGIAEIMTAIEFLTSQPQIEHCDIKVAFGPDEEIGVGADKFEVADFEVDFAYTMDGGPLGELQYETFSAAALEVTFLGRNVHPGTAKDQMINALELAIDFHEKLPAKERPEYTDGYQGFYHLTGLTGTVEEARASYIIRDFEEASFEARKVKVENIAQSMNAHLGTKRVLVELNDQYYNMKKVIEKDMTAIELAKEVMEELAIKPVIEPIRGGTDGSKISFMGIPTPNIFAGGENMHGRFEFVSLQTMERAIDVIIGLVCKA.

Residue His82 participates in Zn(2+) binding. The active site involves Asp84. Asp143 is a binding site for Zn(2+). The active-site Proton acceptor is the Glu177. Residues Glu178, Asp200, and His382 each coordinate Zn(2+).

The protein belongs to the peptidase M20B family. Zn(2+) is required as a cofactor.

The protein resides in the cytoplasm. It catalyses the reaction Release of the N-terminal residue from a tripeptide.. In terms of biological role, cleaves the N-terminal amino acid of tripeptides. The sequence is that of Peptidase T from Streptococcus pyogenes serotype M3 (strain ATCC BAA-595 / MGAS315).